We begin with the raw amino-acid sequence, 1006 residues long: Probable sulfite reductase [NADPH] flavoprotein component (1006 aa).

An FAD-binding FR-type domain is found at Glu-622–Pro-852. FAD is bound by residues Tyr-658–Val-669 and Ile-788–Ser-798.

FAD is required as a cofactor. The cofactor is FMN.

It catalyses the reaction hydrogen sulfide + 3 NADP(+) + 3 H2O = sulfite + 3 NADPH + 4 H(+). The protein operates within sulfur metabolism; hydrogen sulfide biosynthesis; hydrogen sulfide from sulfite (NADPH route): step 1/1. Functionally, this enzyme catalyzes the 6-electron reduction of sulfite to sulfide. This is one of several activities required for the biosynthesis of L-cysteine from sulfate. The sequence is that of Probable sulfite reductase [NADPH] flavoprotein component from Schizosaccharomyces pombe (strain 972 / ATCC 24843) (Fission yeast).